We begin with the raw amino-acid sequence, 361 residues long: D-alanine--D-alanine ligase (361 aa).

Residues 144–350 (KLCVSEAGIA…FPELCDRLLQ (207 aa)) form the ATP-grasp domain. Residue 177-232 (PETLIYPVFVKPAHLGSSVGISKVSVQGELPEALAHACNLDTKVLIEQAMHGKEIE) coordinates ATP. Mg(2+) is bound by residues D303, E317, and N319.

The protein belongs to the D-alanine--D-alanine ligase family. Mg(2+) serves as cofactor. It depends on Mn(2+) as a cofactor.

The protein resides in the cytoplasm. The catalysed reaction is 2 D-alanine + ATP = D-alanyl-D-alanine + ADP + phosphate + H(+). The protein operates within cell wall biogenesis; peptidoglycan biosynthesis. Functionally, cell wall formation. The protein is D-alanine--D-alanine ligase of Chlorobium phaeovibrioides (strain DSM 265 / 1930) (Prosthecochloris vibrioformis (strain DSM 265)).